The chain runs to 155 residues: Small ribosomal subunit protein uS7cz/uS7cy (155 aa).

This sequence belongs to the universal ribosomal protein uS7 family. In terms of assembly, part of the 30S ribosomal subunit.

The protein localises to the plastid. It is found in the chloroplast. Functionally, one of the primary rRNA binding proteins, it binds directly to 16S rRNA where it nucleates assembly of the head domain of the 30S subunit. The protein is Small ribosomal subunit protein uS7cz/uS7cy (rps7-A) of Psilotum nudum (Whisk fern).